The sequence spans 251 residues: Imidazole glycerol phosphate synthase subunit HisF (251 aa).

Active-site residues include Asp12 and Asp131.

This sequence belongs to the HisA/HisF family. As to quaternary structure, heterodimer of HisH and HisF.

It is found in the cytoplasm. It carries out the reaction 5-[(5-phospho-1-deoxy-D-ribulos-1-ylimino)methylamino]-1-(5-phospho-beta-D-ribosyl)imidazole-4-carboxamide + L-glutamine = D-erythro-1-(imidazol-4-yl)glycerol 3-phosphate + 5-amino-1-(5-phospho-beta-D-ribosyl)imidazole-4-carboxamide + L-glutamate + H(+). Its pathway is amino-acid biosynthesis; L-histidine biosynthesis; L-histidine from 5-phospho-alpha-D-ribose 1-diphosphate: step 5/9. In terms of biological role, IGPS catalyzes the conversion of PRFAR and glutamine to IGP, AICAR and glutamate. The HisF subunit catalyzes the cyclization activity that produces IGP and AICAR from PRFAR using the ammonia provided by the HisH subunit. This chain is Imidazole glycerol phosphate synthase subunit HisF, found in Streptomyces avermitilis (strain ATCC 31267 / DSM 46492 / JCM 5070 / NBRC 14893 / NCIMB 12804 / NRRL 8165 / MA-4680).